Consider the following 222-residue polypeptide: Putative thymidylate synthase (222 aa).

The active site involves C146.

It belongs to the thymidylate synthase family. Archaeal-type ThyA subfamily. Monomer.

Its subcellular location is the cytoplasm. It functions in the pathway pyrimidine metabolism; dTTP biosynthesis. Functionally, may catalyze the biosynthesis of dTMP using an unknown cosubstrate. In Methanothermobacter thermautotrophicus (strain ATCC 29096 / DSM 1053 / JCM 10044 / NBRC 100330 / Delta H) (Methanobacterium thermoautotrophicum), this protein is Putative thymidylate synthase.